Here is a 93-residue protein sequence, read N- to C-terminus: Large ribosomal subunit protein uL23 (93 aa).

This sequence belongs to the universal ribosomal protein uL23 family. As to quaternary structure, part of the 50S ribosomal subunit. Contacts protein L29, and trigger factor when it is bound to the ribosome.

One of the early assembly proteins it binds 23S rRNA. One of the proteins that surrounds the polypeptide exit tunnel on the outside of the ribosome. Forms the main docking site for trigger factor binding to the ribosome. This is Large ribosomal subunit protein uL23 from Campylobacter fetus subsp. fetus (strain 82-40).